We begin with the raw amino-acid sequence, 348 residues long: UDP-glucose 4-epimerase (348 aa).

Residues 12-14, 33-37, 66-67, F88, and K92 contribute to the NAD(+) site; these read GYI, DNFHN, and DI. 132–134 is a substrate binding site; the sequence is SAT. The active-site Proton acceptor is Y157. 2 residues coordinate NAD(+): K161 and Y185. Residues 185–187, 206–208, 224–226, R239, and 300–303 contribute to the substrate site; these read YFN, NNL, NVF, and REGD.

Belongs to the NAD(P)-dependent epimerase/dehydratase family. In terms of assembly, homodimer. It depends on NAD(+) as a cofactor.

The enzyme catalyses UDP-alpha-D-glucose = UDP-alpha-D-galactose. It carries out the reaction UDP-N-acetyl-alpha-D-glucosamine = UDP-N-acetyl-alpha-D-galactosamine. Its pathway is carbohydrate metabolism; galactose metabolism. Functionally, catalyzes two distinct but analogous reactions: the reversible epimerization of UDP-glucose to UDP-galactose and the reversible epimerization of UDP-N-acetylglucosamine to UDP-N-acetylgalactosamine. The reaction with UDP-Gal plays a critical role in the Leloir pathway of galactose catabolism in which galactose is converted to the glycolytic intermediate glucose 6-phosphate. It contributes to the catabolism of dietary galactose and enables the endogenous biosynthesis of both UDP-Gal and UDP-GalNAc when exogenous sources are limited. Both UDP-sugar interconversions are important in the synthesis of glycoproteins and glycolipids. The chain is UDP-glucose 4-epimerase from Bos taurus (Bovine).